The following is a 154-amino-acid chain: uncharacterized protein (154 aa).

Positions 104–124 (NNNNNDNDNNNKEKEDNDEKE) are disordered. Residues 112–124 (NNNKEKEDNDEKE) are compositionally biased toward basic and acidic residues.

This is an uncharacterized protein from Dictyostelium discoideum (Social amoeba).